We begin with the raw amino-acid sequence, 174 residues long: UPF0664 stress-induced protein C29B12.11c (174 aa).

A disordered region spans residues 147–174 (HLDPLPPYHRPSSSQDQPPHYEEAVNKS). The segment covering 165–174 (PHYEEAVNKS) has biased composition (basic and acidic residues).

This sequence belongs to the UPF0664 family.

It localises to the cytoplasm. Its subcellular location is the nucleus. In Schizosaccharomyces pombe (strain 972 / ATCC 24843) (Fission yeast), this protein is UPF0664 stress-induced protein C29B12.11c.